Here is an 811-residue protein sequence, read N- to C-terminus: tRNA(Met) cytidine acetyltransferase TmcA (811 aa).

Residues glutamine 267 and arginine 440 each contribute to the ATP site. In terms of domain architecture, N-acetyltransferase spans 474–663; sequence RKEVYLEEPD…GEFTAIVLKP (190 aa). Acetyl-CoA contacts are provided by residues 590–592, glutamate 630, and arginine 637; that span reads IAT.

Belongs to the TmcA family.

The protein resides in the cytoplasm. The catalysed reaction is cytidine(34) in elongator tRNA(Met) + acetyl-CoA + ATP + H2O = N(4)-acetylcytidine(34) in elongator tRNA(Met) + ADP + phosphate + CoA + H(+). It carries out the reaction a cytidine in RNA + acetyl-CoA + ATP + H2O = an N(4)-acetylcytidine in RNA + ADP + phosphate + CoA + H(+). The enzyme catalyses a cytidine in tRNA + acetyl-CoA + ATP + H2O = an N(4)-acetylcytidine in tRNA + ADP + phosphate + CoA + H(+). It catalyses the reaction a cytidine in mRNA + acetyl-CoA + ATP + H2O = an N(4)-acetylcytidine in mRNA + ADP + phosphate + CoA + H(+). Functionally, catalyzes the formation of N(4)-acetylcytidine (ac(4)C) at the wobble position of tRNA(Met), by using acetyl-CoA as an acetyl donor and ATP (or GTP). Catalyzes the formation of 404 N(4)-acetylcytidine (ac(4)C) sites in RNA, almost always on the middle C of a CCG motif. There 173 ac(4)C sites in rRNA, 35 in non-coding (nc)RNA, 119 in mRNA and 77 in tRNA. More acetylation is observed at 85 and 95 than at 65 or 75 degrees Celsius. The protein is tRNA(Met) cytidine acetyltransferase TmcA of Thermococcus kodakarensis (strain ATCC BAA-918 / JCM 12380 / KOD1) (Pyrococcus kodakaraensis (strain KOD1)).